The primary structure comprises 522 residues: MNESPQTNEFKGTTEEAPAKESPHTSEFKGAALVSPISKSMLERLSKFEVEDAENVASYDSKIKKIVHSIVSSFAFGIFGVFLVLLDVTLLLADLIFTDSKLYIPLEYRSISLAIGLFFLMDVLLRVFVEGRQQYFSDLFNILDTAIIVIPLLVDVIYIFFDIKLLRNIPRWTHLVRLLRLIILIRIFHLLHQKRQLEKLMRRLVSENKRRYTRDGFDLDLTYVTERIIAMSFPSSGRQSFYRNPIEEVVRFLDKKHRNHYRVYNLCSERAYDPKHFHNRVSRIMIDDHNVPTLHEMVVFTKEVNEWMAQDLENIVAIHCKGGKGRTGTMVCALLIASEIFLTAEESLYYFGERRTNKTHSNKFQGVETPSQNRYVGYFAQVKHLYNWNLPPRRILFIKRFIIYSIRGDVCDLKVQVVMEKKVVFSSTSLGNCSILHDIETDKILINVYDGPPLYDDVKVQFFSSNLPKYYDNCPFFFWFNTSFIQNNRLCLPRNELDNPHKQKAWKIYPPEFAVEILFGEK.

A compositionally biased stretch (polar residues) spans 1 to 11; the sequence is MNESPQTNEFK. A disordered region spans residues 1 to 28; it reads MNESPQTNEFKGTTEEAPAKESPHTSEF. Basic and acidic residues predominate over residues 12-27; the sequence is GTTEEAPAKESPHTSE. A run of 3 helical transmembrane segments spans residues 66–86, 111–131, and 146–166; these read IVHS…LVLL, ISLA…FVEG, and AIIV…IKLL. Positions 210-386 constitute a Phosphatase tensin-type domain; that stretch reads RRYTRDGFDL…GYFAQVKHLY (177 aa). The Phosphocysteine intermediate role is filled by C320. One can recognise a C2 tensin-type domain in the interval 393–522; it reads RRILFIKRFI…FAVEILFGEK (130 aa).

Isoform 3 is expressed in testis, brain and stomach while isoform 4 seems to be testis-specific.

The protein resides in the endoplasmic reticulum membrane. It localises to the golgi apparatus membrane. It is found in the cytoplasm. The catalysed reaction is a 1,2-diacyl-sn-glycero-3-phospho-(1D-myo-inositol-3,4,5-trisphosphate) + H2O = a 1,2-diacyl-sn-glycero-3-phospho-(1D-myo-inositol-4,5-bisphosphate) + phosphate. Functionally, acts as a lipid phosphatase, removing the phosphate in the D3 position of the inositol ring from phosphatidylinositol 3,4,5-trisphosphate. Shows no phosphoinositide phosphatase activity. This is Phosphatidylinositol 3,4,5-trisphosphate 3-phosphatase TPTE2 (TPTE2) from Homo sapiens (Human).